A 348-amino-acid chain; its full sequence is NADH-ubiquinone oxidoreductase chain 2 (348 aa).

10 helical membrane-spanning segments follow: residues 3–23, 25–45, 59–79, 93–115, 149–169, 178–198, 201–221, 239–259, 276–296, and 326–346; these read PIII…VLMS, HWFM…PVLM, YFLT…INLI, TAST…HFWV, LNMT…GWGG, ILAF…MFNP, TLLN…ILIF, IMTV…PLSG, IALA…YMRL, and LPTL…MMML.

Belongs to the complex I subunit 2 family. As to quaternary structure, core subunit of respiratory chain NADH dehydrogenase (Complex I) which is composed of 45 different subunits. Interacts with TMEM242.

The protein localises to the mitochondrion inner membrane. The catalysed reaction is a ubiquinone + NADH + 5 H(+)(in) = a ubiquinol + NAD(+) + 4 H(+)(out). In terms of biological role, core subunit of the mitochondrial membrane respiratory chain NADH dehydrogenase (Complex I) which catalyzes electron transfer from NADH through the respiratory chain, using ubiquinone as an electron acceptor. Essential for the catalytic activity and assembly of complex I. This chain is NADH-ubiquinone oxidoreductase chain 2, found in Thyroptera tricolor (Spix's disk-winged bat).